A 313-amino-acid chain; its full sequence is tRNA uridine(34) hydroxylase (313 aa).

Residues 124–218 (SDPEVLLIDT…YLEEVPQEET (95 aa)) form the Rhodanese domain. Cysteine 178 (cysteine persulfide intermediate) is an active-site residue.

Belongs to the TrhO family.

It catalyses the reaction uridine(34) in tRNA + AH2 + O2 = 5-hydroxyuridine(34) in tRNA + A + H2O. Catalyzes oxygen-dependent 5-hydroxyuridine (ho5U) modification at position 34 in tRNAs. The polypeptide is tRNA uridine(34) hydroxylase (Pseudomonas fluorescens (strain SBW25)).